The following is a 274-amino-acid chain: Proto-oncogene FRAT1 (274 aa).

4 disordered regions span residues 1–24, 55–107, 132–194, and 232–274; these read MPCR…DDSF, AHDR…PGAV, GASA…DDPH, and GPLS…VPGS. Residues 7-23 are compositionally biased toward acidic residues; sequence EEEEAGDEAEGEEDDDS. The interval 191–214 is involved in GSK-3 binding; the sequence is DDPHRLLQQLVLSGNLIKEAVRRL. Residues Ser243 and Ser246 each carry the phosphoserine modification.

It belongs to the GSK-3-binding protein family. In terms of assembly, binds DVL1. Binds GSK-3 and prevent GSK-3-dependent phosphorylation. Post-translationally, phosphorylated. In terms of tissue distribution, highly expressed in testis. Lower level of expression in spleen, thymus and brain.

It localises to the cytoplasm. Functionally, positively regulates the Wnt signaling pathway by stabilizing beta-catenin through the association with GSK-3. May play a role in tumor progression and collaborate with PIM1 and MYC in lymphomagenesis. This is Proto-oncogene FRAT1 (Frat1) from Mus musculus (Mouse).